The sequence spans 216 residues: 3-keto-L-gulonate-6-phosphate decarboxylase UlaD (216 aa).

A substrate-binding site is contributed by aspartate 11. Mg(2+) is bound by residues glutamate 33 and aspartate 62. Arginine 192 lines the substrate pocket.

Belongs to the HPS/KGPDC family. KGPDC subfamily. In terms of assembly, homodimer. It depends on Mg(2+) as a cofactor.

It carries out the reaction 3-dehydro-L-gulonate 6-phosphate + H(+) = L-xylulose 5-phosphate + CO2. Its pathway is cofactor degradation; L-ascorbate degradation; D-xylulose 5-phosphate from L-ascorbate: step 2/4. Its function is as follows. Catalyzes the decarboxylation of 3-keto-L-gulonate-6-P into L-xylulose-5-P. Is involved in the anaerobic L-ascorbate utilization. The chain is 3-keto-L-gulonate-6-phosphate decarboxylase UlaD from Escherichia fergusonii (strain ATCC 35469 / DSM 13698 / CCUG 18766 / IAM 14443 / JCM 21226 / LMG 7866 / NBRC 102419 / NCTC 12128 / CDC 0568-73).